The chain runs to 413 residues: Peptidase T (413 aa).

His-82 serves as a coordination point for Zn(2+). The active site involves Asp-84. Position 144 (Asp-144) interacts with Zn(2+). The active-site Proton acceptor is Glu-178. Zn(2+)-binding residues include Glu-179, Asp-201, and His-383.

This sequence belongs to the peptidase M20B family. In terms of assembly, homotrimer. The cofactor is Zn(2+).

It is found in the cytoplasm. It carries out the reaction Release of the N-terminal residue from a tripeptide.. With respect to regulation, totally inhibited by EDTA, EGTA, and 1,10-phenanthroline. Strongly inhibited by divalent cations such as Cu(2+), Cd(2+), Co(2+) and Mn(2+). Partially inhibited by the reducing agents 2-mercaptoethanol and dithiothreitol. Functionally, cleaves the N-terminal amino acid of tripeptides. Shows broad substrate specificity, exhibiting maximum activity against hydrophobic tripeptides, with the highest activity for Met-Gly-Gly. Therefore this enzyme may play an important role in flavor formation during cheese ripening. Is also able to slowly hydrolyze some hydrophobic dipeptides, but displays no activity against tetrapeptides and the tripeptide Phe-Gly-Gly. The protein is Peptidase T (pepT) of Lactobacillus helveticus (Lactobacillus suntoryeus).